The following is a 376-amino-acid chain: DNA replication and repair protein RecF (376 aa).

ATP is bound at residue 30-37 (GNNAQGKS).

This sequence belongs to the RecF family.

It localises to the cytoplasm. The RecF protein is involved in DNA metabolism; it is required for DNA replication and normal SOS inducibility. RecF binds preferentially to single-stranded, linear DNA. It also seems to bind ATP. This is DNA replication and repair protein RecF from Nostoc sp. (strain PCC 7120 / SAG 25.82 / UTEX 2576).